The sequence spans 510 residues: Histidine ammonia-lyase (510 aa).

The 5-imidazolinone (Ala-Gly) cross-link spans 143 to 145; the sequence is ASG. Serine 144 is modified (2,3-didehydroalanine (Ser)).

Belongs to the PAL/histidase family. Post-translationally, contains an active site 4-methylidene-imidazol-5-one (MIO), which is formed autocatalytically by cyclization and dehydration of residues Ala-Ser-Gly.

The protein resides in the cytoplasm. It catalyses the reaction L-histidine = trans-urocanate + NH4(+). Its pathway is amino-acid degradation; L-histidine degradation into L-glutamate; N-formimidoyl-L-glutamate from L-histidine: step 1/3. This Shewanella piezotolerans (strain WP3 / JCM 13877) protein is Histidine ammonia-lyase.